Consider the following 332-residue polypeptide: Glyceraldehyde-3-phosphate dehydrogenase (332 aa).

NAD(+)-binding positions include 11–12 (RI), D34, R78, and S120. D-glyceraldehyde 3-phosphate-binding positions include 151–153 (SCT), T182, R197, 210–211 (TG), and R233. C152 acts as the Nucleophile in catalysis. An NAD(+)-binding site is contributed by N314.

It belongs to the glyceraldehyde-3-phosphate dehydrogenase family. Homotetramer.

Its subcellular location is the cytoplasm. The catalysed reaction is D-glyceraldehyde 3-phosphate + phosphate + NAD(+) = (2R)-3-phospho-glyceroyl phosphate + NADH + H(+). The protein operates within carbohydrate degradation; glycolysis; pyruvate from D-glyceraldehyde 3-phosphate: step 1/5. Functionally, catalyzes the oxidative phosphorylation of glyceraldehyde 3-phosphate (G3P) to 1,3-bisphosphoglycerate (BPG) using the cofactor NAD. The first reaction step involves the formation of a hemiacetal intermediate between G3P and a cysteine residue, and this hemiacetal intermediate is then oxidized to a thioester, with concomitant reduction of NAD to NADH. The reduced NADH is then exchanged with the second NAD, and the thioester is attacked by a nucleophilic inorganic phosphate to produce BPG. This Kitasatospora aureofaciens (Streptomyces aureofaciens) protein is Glyceraldehyde-3-phosphate dehydrogenase (gap).